The primary structure comprises 353 residues: Protein AC18 (353 aa).

It localises to the host nucleus. It is found in the host cytoplasm. Its function is as follows. May play a role in occlusion-derived virions (ODV) formation and/or regulation of late viral gene expression. In Autographa californica nuclear polyhedrosis virus (AcMNPV), this protein is Protein AC18 (DA41).